We begin with the raw amino-acid sequence, 563 residues long: Putative cysteine ligase BshC (563 aa).

Belongs to the BshC family.

This chain is Putative cysteine ligase BshC, found in Chlorobium phaeobacteroides (strain BS1).